The chain runs to 634 residues: 3-dehydroshikimate dehydratase (634 aa).

Glu134, Asp165, Gln191, and Glu239 together coordinate a divalent metal cation. VOC domains follow at residues 295–414 (GIEF…LVER) and 440–590 (RVDH…VFTE). Mg(2+) is bound by residues His443, His521, and Glu599.

It belongs to the bacterial two-domain DSD family. In terms of assembly, homodimer. Co(2+) is required as a cofactor. Requires Ni(2+) as cofactor. It depends on Mg(2+) as a cofactor. Mn(2+) serves as cofactor.

It carries out the reaction 3-dehydroshikimate = 3,4-dihydroxybenzoate + H2O. It functions in the pathway aromatic compound metabolism; 3,4-dihydroxybenzoate biosynthesis. Catalyzes the conversion of 3-dehydroshikimate to protocatechuate (3,4-dihydroxybenzoate), a common intermediate of quinate and shikimate degradation pathways. Is required for growth on either quinate or shikimate as a sole carbon source. The chain is 3-dehydroshikimate dehydratase from Pseudomonas aeruginosa (strain ATCC 15692 / DSM 22644 / CIP 104116 / JCM 14847 / LMG 12228 / 1C / PRS 101 / PAO1).